Here is a 216-residue protein sequence, read N- to C-terminus: Adenylate kinase (216 aa).

Position 10–15 (10–15 (GSGKGT)) interacts with ATP. The tract at residues 30–59 (STGEILRKEIKKNKKTKKYIKKTINKGKLI) is NMP. AMP is bound by residues threonine 31, arginine 36, 57–59 (KLI), 85–88 (GFPR), and glutamine 92. The segment at 121 to 158 (GRLIHASSGRTYHKIFNPPKIKNKDDITQEKLCSRNDD) is LID. ATP is bound by residues arginine 122 and 131–132 (TY). Arginine 155 and arginine 166 together coordinate AMP. Residue glutamine 196 coordinates ATP.

It belongs to the adenylate kinase family. In terms of assembly, monomer.

It is found in the cytoplasm. The catalysed reaction is AMP + ATP = 2 ADP. The protein operates within purine metabolism; AMP biosynthesis via salvage pathway; AMP from ADP: step 1/1. Its function is as follows. Catalyzes the reversible transfer of the terminal phosphate group between ATP and AMP. Plays an important role in cellular energy homeostasis and in adenine nucleotide metabolism. The polypeptide is Adenylate kinase (Buchnera aphidicola subsp. Cinara cedri (strain Cc)).